A 132-amino-acid chain; its full sequence is Replication enhancer protein (132 aa).

Belongs to the geminiviridae replication enhancer protein family. In terms of assembly, homooligomer. Interacts with the replication-associated protein (REP). Interacts with host proliferating cell nuclear antigen (PCNA). Interacts with host retinoblastoma-related protein 1 (RBR1), and may thereby deregulate the host cell cycle. Oligomerization and interaction with PCNA are necessary for optimal replication enhancement.

Increases viral DNA accumulation. Enhances infectivity and symptom expression. In Solanum lycopersicum (Tomato), this protein is Replication enhancer protein.